Reading from the N-terminus, the 440-residue chain is Enolase (440 aa).

Q163 contacts (2R)-2-phosphoglycerate. The active-site Proton donor is the E205. The Mg(2+) site is built by D242, E288, and D315. Positions 340, 369, 370, and 391 each coordinate (2R)-2-phosphoglycerate. K340 acts as the Proton acceptor in catalysis.

The protein belongs to the enolase family. It depends on Mg(2+) as a cofactor.

Its subcellular location is the cytoplasm. The protein localises to the secreted. It is found in the cell surface. The enzyme catalyses (2R)-2-phosphoglycerate = phosphoenolpyruvate + H2O. It functions in the pathway carbohydrate degradation; glycolysis; pyruvate from D-glyceraldehyde 3-phosphate: step 4/5. Catalyzes the reversible conversion of 2-phosphoglycerate (2-PG) into phosphoenolpyruvate (PEP). It is essential for the degradation of carbohydrates via glycolysis. This chain is Enolase, found in Limosilactobacillus fermentum (strain NBRC 3956 / LMG 18251) (Lactobacillus fermentum).